Reading from the N-terminus, the 105-residue chain is Diuretic hormone class 2 (105 aa).

A signal peptide spans 1–23 (MTVLCTLMAFVMVVAISSLTVDA). Positions 24 to 63 (IPHSHESYWDQQDDIDRDEFLELLSRLSRTVMNRPEMENS) are excised as a propeptide. Position 96 is a proline amide (P96). A propeptide spanning residues 101–105 (RSEQA) is cleaved from the precursor.

In terms of tissue distribution, expressed in central brain, antennal lobes, retrocerebral complex and gnathal, thoracic and abdominal ganglia but not in optical lobes (at protein level).

It localises to the secreted. Functionally, regulation of fluid secretion. Stimulates Malpighian tubules fluid secretion. The chain is Diuretic hormone class 2 from Camponotus floridanus (Florida carpenter ant).